We begin with the raw amino-acid sequence, 227 residues long: Cytochrome c oxidase subunit 2 (227 aa).

Residues 1 to 14 (MAYPFQLGLQDATS) lie on the Mitochondrial intermembrane side of the membrane. The chain crosses the membrane as a helical span at residues 15–45 (PIMEELTNFHDHTLMIVFLISSLVLYIISSM). Residues 46–59 (LATKMTHTSTMDAQ) are Mitochondrial matrix-facing. Residues 60-87 (SMETIWTILPAVILVLIALPSLRILYMM) traverse the membrane as a helical segment. The Mitochondrial intermembrane portion of the chain corresponds to 88–227 (DEINNPVLTV…FFENWSASMI (140 aa)). The Cu cation site is built by His-161, Cys-196, Glu-198, Cys-200, His-204, and Met-207. Glu-198 contacts Mg(2+).

It belongs to the cytochrome c oxidase subunit 2 family. As to quaternary structure, component of the cytochrome c oxidase (complex IV, CIV), a multisubunit enzyme composed of 14 subunits. The complex is composed of a catalytic core of 3 subunits MT-CO1, MT-CO2 and MT-CO3, encoded in the mitochondrial DNA, and 11 supernumerary subunits COX4I, COX5A, COX5B, COX6A, COX6B, COX6C, COX7A, COX7B, COX7C, COX8 and NDUFA4, which are encoded in the nuclear genome. The complex exists as a monomer or a dimer and forms supercomplexes (SCs) in the inner mitochondrial membrane with NADH-ubiquinone oxidoreductase (complex I, CI) and ubiquinol-cytochrome c oxidoreductase (cytochrome b-c1 complex, complex III, CIII), resulting in different assemblies (supercomplex SCI(1)III(2)IV(1) and megacomplex MCI(2)III(2)IV(2)). Found in a complex with TMEM177, COA6, COX18, COX20, SCO1 and SCO2. Interacts with TMEM177 in a COX20-dependent manner. Interacts with COX20. Interacts with COX16. Cu cation is required as a cofactor.

It localises to the mitochondrion inner membrane. The catalysed reaction is 4 Fe(II)-[cytochrome c] + O2 + 8 H(+)(in) = 4 Fe(III)-[cytochrome c] + 2 H2O + 4 H(+)(out). In terms of biological role, component of the cytochrome c oxidase, the last enzyme in the mitochondrial electron transport chain which drives oxidative phosphorylation. The respiratory chain contains 3 multisubunit complexes succinate dehydrogenase (complex II, CII), ubiquinol-cytochrome c oxidoreductase (cytochrome b-c1 complex, complex III, CIII) and cytochrome c oxidase (complex IV, CIV), that cooperate to transfer electrons derived from NADH and succinate to molecular oxygen, creating an electrochemical gradient over the inner membrane that drives transmembrane transport and the ATP synthase. Cytochrome c oxidase is the component of the respiratory chain that catalyzes the reduction of oxygen to water. Electrons originating from reduced cytochrome c in the intermembrane space (IMS) are transferred via the dinuclear copper A center (CU(A)) of subunit 2 and heme A of subunit 1 to the active site in subunit 1, a binuclear center (BNC) formed by heme A3 and copper B (CU(B)). The BNC reduces molecular oxygen to 2 water molecules using 4 electrons from cytochrome c in the IMS and 4 protons from the mitochondrial matrix. The sequence is that of Cytochrome c oxidase subunit 2 (MT-CO2) from Acomys wilsoni (Wilson's spiny mouse).